A 77-amino-acid chain; its full sequence is Large ribosomal subunit protein bL31 (77 aa).

C16, C18, C37, and C40 together coordinate Zn(2+).

Belongs to the bacterial ribosomal protein bL31 family. Type A subfamily. As to quaternary structure, part of the 50S ribosomal subunit. It depends on Zn(2+) as a cofactor.

Functionally, binds the 23S rRNA. The chain is Large ribosomal subunit protein bL31 from Pseudomonas fluorescens (strain SBW25).